Here is a 333-residue protein sequence, read N- to C-terminus: Ferrochelatase (333 aa).

Residues H202 and E284 each contribute to the Fe cation site.

It belongs to the ferrochelatase family.

The protein localises to the cytoplasm. The catalysed reaction is heme b + 2 H(+) = protoporphyrin IX + Fe(2+). It functions in the pathway porphyrin-containing compound metabolism; protoheme biosynthesis; protoheme from protoporphyrin-IX: step 1/1. Its function is as follows. Catalyzes the ferrous insertion into protoporphyrin IX. This chain is Ferrochelatase, found in Francisella tularensis subsp. holarctica (strain LVS).